Here is a 347-residue protein sequence, read N- to C-terminus: MAKGLLMTYTLWAVGGPAGLHHLYLGRDSHALLWMLTLGGGGLGWLWEFWMLPSFVAQANRAQEQRQGSGRGTPPLSLIRFVAQMIVGMYFGLVALISLSFMASFYIVGLPLAVGLGVLLVAAVGNQTSDLKNTLGAAFLTSPIFYGRPIAILPISLAASITAQKHRRYKPSVGSETLSVRLYRLGLAYLAFTGPLVHSVLCHTAVTLSYVADTLGSFLSWFSFFPLLGRLLESVLLLPFRAWKLLVGDHGISSSYFQEWEKLYEFVHSFQDEKRQLALQVFGLSEGATNEEIHGRYRELVKTWHPDHNRYQMEEAQRRFLEIQAAYEVLRQPRKPRGSWRWEETSF.

The TM2 domain occupies 4–50 (GLLMTYTLWAVGGPAGLHHLYLGRDSHALLWMLTLGGGGLGWLWEFW). 7 helical membrane-spanning segments follow: residues 5-25 (LLMTYTLWAVGGPAGLHHLYL), 32-52 (LLWMLTLGGGGLGWLWEFWML), 81-101 (FVAQMIVGMYFGLVALISLSF), 105-125 (FYIVGLPLAVGLGVLLVAAVG), 135-155 (LGAAFLTSPIFYGRPIAILPI), 186-206 (GLAYLAFTGPLVHSVLCHTAV), and 218-238 (FLSWFSFFPLLGRLLESVLLL). Positions 277-347 (LALQVFGLSE…GSWRWEETSF (71 aa)) constitute a J domain.

The protein localises to the membrane. In terms of biological role, may function as a co-chaperone. This chain is DnaJ homolog subfamily C member 22 (DNAJC22), found in Bos taurus (Bovine).